A 450-amino-acid polypeptide reads, in one-letter code: MTHVRFDYSKALTFFNEHELTYLRDFVKTAHHNIHEKTGAGSDFLGWVDLPEHYDKEEFARIKKSAEKIKSDSDVLLVVGIGGSYLGARAAIEALNHAFYNTLPKAKRGNPQVIFIGNNISSSYMRDVMDLLEDVDFSINVISKSGTTTEPAIAFRIFRKLLEEKYGKEEAKARIYATTDKERGALKTLSNEEGFESFVIPDDVGGRYSVLTAVGLLPIAVSGVNIDDMMKGALDASKDFATSELEDNPAYQYAVVRNVLYNKGKTIEMLINYEPALQYFAEWWKQLFGESEGKDEKGIYPSSANYSTDLHSLGQYVQEGRRDLFETVLNVEKPKHELTIEEADNDLDGLNYLAGKTVDFVNKKAFQGTMLAHTDGNVPNLIVNIPELNAYTFGYLVYFFEKACAMSGYLLGVNPFDQPGVEAYKVNMFALLGKPGFEEKKAELEKRLED.

A Phosphothreonine modification is found at Thr38. Glu290 functions as the Proton donor in the catalytic mechanism. Residues His311 and Lys425 contribute to the active site.

Belongs to the GPI family.

It localises to the cytoplasm. The catalysed reaction is alpha-D-glucose 6-phosphate = beta-D-fructose 6-phosphate. Its pathway is carbohydrate biosynthesis; gluconeogenesis. The protein operates within carbohydrate degradation; glycolysis; D-glyceraldehyde 3-phosphate and glycerone phosphate from D-glucose: step 2/4. Its function is as follows. Catalyzes the reversible isomerization of glucose-6-phosphate to fructose-6-phosphate. In Bacillus subtilis (strain 168), this protein is Glucose-6-phosphate isomerase.